A 719-amino-acid chain; its full sequence is MFGQGYYQGNRDQDSPLQRPPAAQFSSAYMEQQGSHQSLQEHLAYEQLQLQQQQQQQQQHAAAPHANGDGYGAGFTDIPTMLGSVGAPSPAFQPPMVVGMQQQPINTPPPTATSIYSQNNNSFTNVNDTTLAPGHSSPGHYSNSSDYSGQQPASSAYKQFGGSESPLQPAALPGLLDGSLGDQTLVGNQSSQGAMLSRQSLQCSSVPQSPNGGQRQTSGVGNYMYFERRPELLSKSTQEKAAAVKLKVENFYQSSVNHAIERNQRRVELESQLLSHGWSEERKNRQLSSLGKKESQFLRLRRTRLSLEDFHTVKVIGKGAFGEVRLVQKKDTGKIYAMKTLLKSEMYKKDQLAHVKAERDVLAGSDSPWVVSLYYSFQDAQYLYLIMEFLPGGDLMTMLIRWQIFTEDVTRFYMAECILAIEAIHKLGFIHRDIKPDNILIDIRGHIKLSDFGLSTGFHKTHDSNYYKKLLQEDEQQQNGGNMGKYPASGGGGNGGGNRNTMLVDAIHLTMTNRQQMQTWRKSRRLMAYSTVGTPDYIAPEIFLYQGYGQECDWWSLGAIMYECLIGWPPFCSETPQETYRKIMNFEQTLVFPDDIHISYEAEDLIRRLLSHADERLGRHGANEIKNHPFFRGVDWETIRQVGAPYIPKLSSVTDTRFFPTDELENVPDSPAMAQAAKQREQMLKQGGSAANTAQAKEDLPFIGYTYSRFDYLTRKNAL.

Disordered stretches follow at residues 1-75 and 100-219; these read MFGQ…GAGF and MQQQ…QTSG. A compositionally biased stretch (polar residues) spans 24-38; sequence QFSSAYMEQQGSHQS. Positions 40–63 are enriched in low complexity; the sequence is QEHLAYEQLQLQQQQQQQQQHAAA. 3 stretches are compositionally biased toward polar residues: residues 112 to 130, 139 to 157, and 181 to 219; these read ATSI…NDTT, GHYS…SSAY, and GDQT…QTSG. Residues 310–631 enclose the Protein kinase domain; the sequence is FHTVKVIGKG…ANEIKNHPFF (322 aa). ATP is bound by residues 316-324 and Lys339; that span reads IGKGAFGEV. The active-site Proton acceptor is the Asp433. The 86-residue stretch at 632-717 folds into the AGC-kinase C-terminal domain; that stretch reads RGVDWETIRQ…SRFDYLTRKN (86 aa).

This sequence belongs to the protein kinase superfamily. STE Ser/Thr protein kinase family. COT1 subfamily.

It catalyses the reaction L-seryl-[protein] + ATP = O-phospho-L-seryl-[protein] + ADP + H(+). The catalysed reaction is L-threonyl-[protein] + ATP = O-phospho-L-threonyl-[protein] + ADP + H(+). Protein kinase that seems to play a role in the regulation of cell morphogenesis and proliferation. The protein is Serine/threonine-protein kinase CBK1 (CBK1) of Eremothecium gossypii (strain ATCC 10895 / CBS 109.51 / FGSC 9923 / NRRL Y-1056) (Yeast).